The primary structure comprises 438 residues: Coiled-coil domain-containing protein 78 (438 aa).

Coiled-coil stretches lie at residues 74–105 (HLHEQHEAEIFQLKSEILRLESRVLELELRGD) and 217–246 (SCQGQLRQAEAENARLQLQLKKLKDEYVLR). The tract at residues 345 to 381 (FSHREDQHGGPGALLSSPKKRPGGASQGGTSEPQGLD) is disordered.

Belongs to the CCDC78 family. Expressed primarily in skeletal muscle.

Its subcellular location is the cytoplasm. The protein localises to the cytoskeleton. It is found in the microtubule organizing center. The protein resides in the centrosome. It localises to the centriole. Its subcellular location is the perinuclear region. The protein localises to the cell membrane. It is found in the sarcolemma. The protein resides in the sarcoplasmic reticulum. Component of the deuterosome, a structure that promotes de novo centriole amplification in multiciliated cells that can generate more than 100 centrioles. Deuterosome-mediated centriole amplification occurs in terminally differentiated multiciliated cells (G1/0) and not in S phase. Essential for centriole amplification and is required for CEP152 localization to the deuterosome. In Homo sapiens (Human), this protein is Coiled-coil domain-containing protein 78 (CCDC78).